Reading from the N-terminus, the 1248-residue chain is Apoptotic protease-activating factor 1 (1248 aa).

In terms of domain architecture, CARD spans 1–90 (MDAKARNCLL…KDLAALLHDG (90 aa)). The 312-residue stretch at 104-415 (SGITSYVRTV…METEEVEDIL (312 aa)) folds into the NB-ARC domain. Residues 154–161 (GMAGCGKS) and R265 contribute to the ATP site. The WD 1-1 repeat unit spans residues 613–652 (PHTDAVYHACFSEDGQRIASCGADKTLQVFKAETGEKLLE). The stretch at 655-694 (AHEDEVLCCAFSTDDRFIATCSVDKKVKIWNSMTGELVHT) is one WD 1-2 repeat. One copy of the WD 1-3 repeat lies at 697–738 (EHSEQVNCCHFTNSSHHLLLATGSSDCFLKLWDLNQKECRNT). One copy of the WD 1-4 repeat lies at 741 to 780 (GHTNSVNHCRFSPDDKLLASCSADGTLKLWDATSANERKS). A WD 1-5 repeat occupies 796–836 (DMEVIVKCCSWSADGARIMVAAKNKIFLFDIHTSGLLGEIH). A WD 1-6 repeat occupies 838-877 (GHHSTIQYCDFSPQNHLAVVALSQYCVELWNTDSRSKVAD). One copy of the WD 1-7 repeat lies at 880 to 910 (GHLSWVHGVMFSPDGSSFLTSSDDQTIRLWE). The interpropeller linker stretch occupies residues 910-921 (ETKKVCKNSAVM). One copy of the WD 2-1 repeat lies at 922–958 (LKQEVDVVFQENEVMVLAVDHIRRLQLINGRTGQIDY). Residues 959 to 998 (LTEAQVSCCCLSPHLQYIAFGDENGAIEILELVNNRIFQS) form a WD 2-2 repeat. A WD 2-3 repeat occupies 1001–1040 (QHKKTVWHIQFTADEKTLISSSDDAEIQVWNWQLDKCIFL). A WD 2-4 repeat occupies 1042 to 1080 (GHQETVKDFRLLKNSRLLSWSFDGTVKVWNIITGNKEKD). The WD 2-5 repeat unit spans residues 1083-1122 (CHQGTVLSCDISHDATKFSSTSADKTAKIWSFDLLLPLHE). One copy of the WD 2-6 repeat lies at 1125–1164 (GHNGCVRCSAFSVDSTLLATGDDNGEIRIWNVSNGELLHL). One copy of the WD 2-7 repeat lies at 1175–1212 (THGGWVTDLCFSPDGKMLISAGGYIKWWNVVTGESSQT). Residues 1213-1248 (FYTNGTNLKKIHVSPDFKTYVTVDNLGILYILQTLE) form a WD 2-8 repeat.

As to quaternary structure, monomer. Oligomerizes to a heptameric ring, known as the apoptosome, upon binding of cytochrome c and dATP. Oligomeric Apaf-1 and pro-caspase-9 bind to each other via their respective NH2-terminal CARD domains and consecutively mature caspase-9 is released from the complex. Pro-caspase-3 is recruited into the Apaf-1-pro-caspase-9 complex via interaction with pro-caspase-9. Interacts with APIP. Interacts (via CARD and NACHT domains) with NAIP/BIRC1 (via NACHT domain). Interacts with CIAO2A. In terms of tissue distribution, ubiquitous. Highest levels of expression in adult spleen and peripheral blood leukocytes, and in fetal brain, kidney and lung. Isoform 1 is expressed in heart, kidney and liver.

Its subcellular location is the cytoplasm. In terms of biological role, oligomeric Apaf-1 mediates the cytochrome c-dependent autocatalytic activation of pro-caspase-9 (Apaf-3), leading to the activation of caspase-3 and apoptosis. This activation requires ATP. Isoform 6 is less effective in inducing apoptosis. The polypeptide is Apoptotic protease-activating factor 1 (Homo sapiens (Human)).